The following is a 98-amino-acid chain: Leydig cell tumor 10 kDa protein homolog (98 aa).

Disordered stretches follow at residues 1-38 (MAQG…RVIA) and 73-98 (SLPK…KMPA). The span at 16-25 (SKAAAAAASA) shows a compositional bias: low complexity. Basic residues predominate over residues 28–38 (RGPRKGGRVIA). Low complexity predominate over residues 73–83 (SLPKKLALLKA).

Belongs to the UPF0390 family.

May have a potential role in hypercalcemia of malignancy. This is Leydig cell tumor 10 kDa protein homolog from Bos taurus (Bovine).